The sequence spans 386 residues: Alanine racemase (386 aa).

Lys-38 serves as the catalytic Proton acceptor; specific for D-alanine. Residue Lys-38 is modified to N6-(pyridoxal phosphate)lysine. Arg-136 serves as a coordination point for substrate. Residue Tyr-267 is the Proton acceptor; specific for L-alanine of the active site. Met-315 lines the substrate pocket.

The protein belongs to the alanine racemase family. It depends on pyridoxal 5'-phosphate as a cofactor.

The catalysed reaction is L-alanine = D-alanine. It participates in amino-acid biosynthesis; D-alanine biosynthesis; D-alanine from L-alanine: step 1/1. Its function is as follows. Catalyzes the interconversion of L-alanine and D-alanine. May also act on other amino acids. In Clostridium perfringens (strain ATCC 13124 / DSM 756 / JCM 1290 / NCIMB 6125 / NCTC 8237 / Type A), this protein is Alanine racemase (alr).